A 142-amino-acid polypeptide reads, in one-letter code: Large ribosomal subunit protein uL11 (142 aa).

The protein belongs to the universal ribosomal protein uL11 family. As to quaternary structure, part of the ribosomal stalk of the 50S ribosomal subunit. Interacts with L10 and the large rRNA to form the base of the stalk. L10 forms an elongated spine to which L12 dimers bind in a sequential fashion forming a multimeric L10(L12)X complex. One or more lysine residues are methylated.

Forms part of the ribosomal stalk which helps the ribosome interact with GTP-bound translation factors. This Glaesserella parasuis serovar 5 (strain SH0165) (Haemophilus parasuis) protein is Large ribosomal subunit protein uL11.